Reading from the N-terminus, the 440-residue chain is MNVQLNEIWNRTLELLKGEMTEISFNTWILTIEPISIDSNTITLGVPADFNKGILEARYSYLIKNALRQISHRDYNIYFAIPSQTPVKPVAQEYTEDSNMSFLNPKYTFDTFVIGNGNRFAHAASLAVAEAPAKAYNPLFLYGGVGLGKTHLMHAIGHFVLSQNPALKVLYVSSEKFTNELINAIRDDKNEEFRYKYRNIDVLLIDDIQFIGGKERTEEEFFHTFNALYEANKQIIISSDKPPKEIPTLEDRLRSRFEWGLIADIAPPDLETRIAILRKKAQLENLDVPDDVMVFIADKVASNIRELEGALNRVIAYSTLTENIINVDMAVEALKDMLNNSKAIIINSKTIQEAVARYFHLKTDDLKSKRRSRDVSFPRQIAMYLCRDMTDMSLPKIGDEFGGRDHTTVIHACEKINNDLNNSTELKRTVEEIKKNITGG.

The tract at residues 1–93 is domain I, interacts with DnaA modulators; it reads MNVQLNEIWN…QTPVKPVAQE (93 aa). Positions 94 to 101 are domain II; sequence YTEDSNMS. Residues 102–318 form a domain III, AAA+ region region; it reads FLNPKYTFDT…GALNRVIAYS (217 aa). ATP contacts are provided by G146, G148, K149, and T150. A domain IV, binds dsDNA region spans residues 319–440; it reads TLTENIINVD…EEIKKNITGG (122 aa).

It belongs to the DnaA family. As to quaternary structure, oligomerizes as a right-handed, spiral filament on DNA at oriC.

It localises to the cytoplasm. Its function is as follows. Plays an essential role in the initiation and regulation of chromosomal replication. ATP-DnaA binds to the origin of replication (oriC) to initiate formation of the DNA replication initiation complex once per cell cycle. Binds the DnaA box (a 9 base pair repeat at the origin) and separates the double-stranded (ds)DNA. Forms a right-handed helical filament on oriC DNA; dsDNA binds to the exterior of the filament while single-stranded (ss)DNA is stabiized in the filament's interior. The ATP-DnaA-oriC complex binds and stabilizes one strand of the AT-rich DNA unwinding element (DUE), permitting loading of DNA polymerase. After initiation quickly degrades to an ADP-DnaA complex that is not apt for DNA replication. Binds acidic phospholipids. This Ruminiclostridium cellulolyticum (strain ATCC 35319 / DSM 5812 / JCM 6584 / H10) (Clostridium cellulolyticum) protein is Chromosomal replication initiator protein DnaA.